Consider the following 361-residue polypeptide: Glutaminyl-peptide cyclotransferase (361 aa).

The signal sequence occupies residues 1-28 (MAGGRHRRVVGTLHLLLLVAALPWASRG). An N-linked (GlcNAc...) asparagine glycan is attached at Asn49. Cys139 and Cys164 are disulfide-bonded. A Zn(2+)-binding site is contributed by Asp159. Catalysis depends on Glu201, which acts as the Proton acceptor. A Zn(2+)-binding site is contributed by Glu202. Asp248 serves as the catalytic Proton acceptor. The N-linked (GlcNAc...) asparagine glycan is linked to Asn296. Residue His330 participates in Zn(2+) binding.

It belongs to the glutaminyl-peptide cyclotransferase family.

Its subcellular location is the secreted. The enzyme catalyses N-terminal L-glutaminyl-[peptide] = N-terminal 5-oxo-L-prolyl-[peptide] + NH4(+). Responsible for the biosynthesis of pyroglutamyl peptides. Has a bias against acidic and tryptophan residues adjacent to the N-terminal glutaminyl residue and a lack of importance of chain length after the second residue. Also catalyzes N-terminal pyroglutamate formation. In vitro, catalyzes pyroglutamate formation of N-terminally truncated form of APP amyloid-beta peptides [Glu-3]-amyloid-beta. May be involved in the N-terminal pyroglutamate formation of several amyloid-related plaque-forming peptides. This Homo sapiens (Human) protein is Glutaminyl-peptide cyclotransferase (QPCT).